The sequence spans 617 residues: MSAFFAPTLRSAPADATIASHQLLMRAGYVRKIANGLFAYLPLGLRVRHKIEAIIREELEAIGCLECTAPVVTPAELWKESGRWYRMGAELLRAKNRLDHELLFSPTAEESFTALVRGDCTSYKHFPLSLYQINAKYRDEIRPRYGLMRAREFTMADAYSFHTDCACLARTYEKFAHAYRAIFRRIGLSVIAVHAHLGAMGGQESEEFMVESAVGDNTLLLCPHCTYAANCEKAVGQRPLPDTHDTHLKDEHEGSDLKTPAAMREVHTPHVKTIEELEHFLHVPAHRCIKTLIYRIDTVPQAAGHFVAVCIRGDLELNESKLEALLRVPSVVLATEQEVYALSGTPVGFIGPVGLAQRAAAAYAARTPAFFPSAAEPASVTSDIPFFSLVADQSVMAMHNAITGALKVDTHLVQVEPGRDFVPDAVADLMLVRAGDRCIHCGAPLYEKKGNELGHLFKLGDKYTRSMHLTFTDEQGVRQFPLMGCYGIGLDRTLASVVENHHDTRGISWPLAISPYAVVLIPIPHTQAPYAAAEALYVQLRTRGVEVLFDDRAERPGVKFADADLIGIPLRVVLSAKTLPRVECTTRCGAHTYFFTQEEASEHIARLLEQLASPESS.

This sequence belongs to the class-II aminoacyl-tRNA synthetase family. ProS type 1 subfamily. As to quaternary structure, homodimer.

The protein resides in the cytoplasm. It catalyses the reaction tRNA(Pro) + L-proline + ATP = L-prolyl-tRNA(Pro) + AMP + diphosphate. In terms of biological role, catalyzes the attachment of proline to tRNA(Pro) in a two-step reaction: proline is first activated by ATP to form Pro-AMP and then transferred to the acceptor end of tRNA(Pro). As ProRS can inadvertently accommodate and process non-cognate amino acids such as alanine and cysteine, to avoid such errors it has two additional distinct editing activities against alanine. One activity is designated as 'pretransfer' editing and involves the tRNA(Pro)-independent hydrolysis of activated Ala-AMP. The other activity is designated 'posttransfer' editing and involves deacylation of mischarged Ala-tRNA(Pro). The misacylated Cys-tRNA(Pro) is not edited by ProRS. The chain is Proline--tRNA ligase from Treponema pallidum (strain Nichols).